The primary structure comprises 230 residues: Acetyltransferase (230 aa).

Positions 143–230 (RYLDGKVICD…RVAVYKARQT (88 aa)) constitute an N-acetyltransferase domain.

It functions in the pathway mycotoxin biosynthesis. In terms of biological role, acetyltransferase; part of the satratoxin SC3 cluster involved in the biosynthesis of satratoxins, trichothecene mycotoxins that are associated with human food poisonings. Satratoxins are suggested to be made by products of multiple gene clusters (SC1, SC2 and SC3) that encode 21 proteins in all, including polyketide synthases, acetyltransferases, and other enzymes expected to modify the trichothecene skeleton. SC1 encodes 10 proteins, SAT1 to SAT10. The largest are SAT8, which encodes a putative polyketide synthase (PKS) with a conventional non-reducing architecture, and SAT10, a putative protein containing four ankyrin repeats and thus may be involved in protein scaffolding. The putative short-chain reductase SAT3 may assist the PKS in some capacity. SAT6 contains a secretory lipase domain and acts probably as a trichothecene esterase. SAT5 encodes a putative acetyltransferase, and so, with SAT6, may affect endogenous protection from toxicity. The probable transcription factor SAT9 may regulate the expression of the SC1 cluster. SC2 encodes proteins SAT11 to SAT16, the largest of which encodes the putative reducing PKS SAT13. SAT11 is a cytochrome P450 monooxygenase, while SAT14 and SAT16 are probable acetyltransferases. The SC2 cluster may be regulated by the transcription factor SAT15. SC3 is a small cluster that encodes 5 proteins, SAT17 to SAT21. SAT21 is a putative MFS-type transporter which may have a role in exporting secondary metabolites. The four other proteins putatively encoded in SC3 include the taurine hydroxylase-like protein SAT17, the O-methyltransferase SAT18, the acetyltransferase SAT19, and the Cys6-type zinc finger SAT20, the latter being probably involved in regulation of SC3 expression. This chain is Acetyltransferase, found in Stachybotrys chartarum (strain CBS 109288 / IBT 7711) (Toxic black mold).